The primary structure comprises 267 residues: Ribosomal RNA small subunit methyltransferase J (267 aa).

S-adenosyl-L-methionine is bound by residues 133 to 134 and Asp187; that span reads ER.

Belongs to the methyltransferase superfamily. RsmJ family.

It localises to the cytoplasm. It carries out the reaction guanosine(1516) in 16S rRNA + S-adenosyl-L-methionine = N(2)-methylguanosine(1516) in 16S rRNA + S-adenosyl-L-homocysteine + H(+). Functionally, specifically methylates the guanosine in position 1516 of 16S rRNA. The polypeptide is Ribosomal RNA small subunit methyltransferase J (Halorhodospira halophila (strain DSM 244 / SL1) (Ectothiorhodospira halophila (strain DSM 244 / SL1))).